The chain runs to 136 residues: Small ribosomal subunit protein bS16 (136 aa).

Residues 113–122 (LALKSHRRSA) are compositionally biased toward basic residues. The segment at 113-136 (LALKSHRRSAKKEAEAKAATGGEA) is disordered.

The protein belongs to the bacterial ribosomal protein bS16 family.

This chain is Small ribosomal subunit protein bS16, found in Pelodictyon phaeoclathratiforme (strain DSM 5477 / BU-1).